A 345-amino-acid polypeptide reads, in one-letter code: Fructose-bisphosphate aldolase (345 aa).

Ser-53 is a D-glyceraldehyde 3-phosphate binding site. Residue Asp-95 is the Proton donor of the active site. His-96, Asp-131, Glu-161, and His-212 together coordinate Zn(2+). Gly-213 serves as a coordination point for dihydroxyacetone phosphate. Residue His-252 coordinates Zn(2+). Residues 253–255 and 274–277 each bind dihydroxyacetone phosphate; these read GGS and NVDT.

This sequence belongs to the class II fructose-bisphosphate aldolase family. Zn(2+) serves as cofactor.

It catalyses the reaction beta-D-fructose 1,6-bisphosphate = D-glyceraldehyde 3-phosphate + dihydroxyacetone phosphate. The protein operates within carbohydrate degradation; glycolysis; D-glyceraldehyde 3-phosphate and glycerone phosphate from D-glucose: step 4/4. Its function is as follows. Catalyzes the aldol condensation of dihydroxyacetone phosphate (DHAP or glycerone-phosphate) with glyceraldehyde 3-phosphate (G3P) to form fructose 1,6-bisphosphate (FBP) in gluconeogenesis and the reverse reaction in glycolysis. This is Fructose-bisphosphate aldolase (fba) from Mycobacterium leprae (strain TN).